Consider the following 1891-residue polypeptide: TATA-binding protein-associated factor mot1 (1891 aa).

An HEAT 1 repeat occupies 30 to 68; sequence PDELFNLLGRILPYLRSKSWDTRAAAAKAIGLIVANADT. Disordered regions lie at residues 184–216, 241–283, and 295–316; these read FVAS…LSKR, LSSR…LDRS, and FKGA…EGPN. Over residues 264–275 the composition is skewed to basic and acidic residues; it reads ENGEERNGDSKP. HEAT repeat units follow at residues 473–511 and 569–606; these read SKLM…EFVK and SSFG…LEGE. Residues 699–710 are compositionally biased toward low complexity; that stretch reads SAAAPARSSPAS. A disordered region spans residues 699–740; the sequence is SAAAPARSSPASNTPEGTKGRRRKSEKKEAPPPSAHNVDGHM. 4 HEAT repeats span residues 957-996, 1139-1177, 1181-1216, and 1219-1257; these read PKKP…YYTT, YPWV…VITV, TMLV…VMED, and LPYV…LVPL. One can recognise a Helicase ATP-binding domain in the interval 1316 to 1489; the sequence is AFLNRYNLHG…WSLFDFLMPG (174 aa). 1329-1336 lines the ATP pocket; the sequence is DDMGLGKT. A DEAH box motif is present at residues 1440 to 1443; that stretch reads DEGH. Residues 1526-1565 form an HEAT 8 repeat; the sequence is EALHKQVLPFLLRRLKEEVLNDLPPKIIQNYYCDPSELQR. One can recognise a Helicase C-terminal domain in the interval 1663-1813; sequence DLSGASYVSP…STVVNQQNAG (151 aa).

This sequence belongs to the SNF2/RAD54 helicase family. In terms of assembly, forms the NCT transcriptional regulatory complex with nctA and nctB.

The protein localises to the nucleus. Its function is as follows. Regulates transcription in association with TATA binding protein (TBP). Removes TBP from the TATA box via its C-terminal ATPase activity. Both transcription activation and repression require its ATPase activity. Part of the NCT transcriptional regulatory complex that acts as a key regulator of ergosterol biosynthesis and the azole exporter cdr1B. The NCT complex binds the promoters of genes linked to azole susceptibility, and especially represses the expression of cdr1B transporter. This Aspergillus fumigatus (strain CBS 144.89 / FGSC A1163 / CEA10) (Neosartorya fumigata) protein is TATA-binding protein-associated factor mot1.